A 409-amino-acid chain; its full sequence is Isovaleryl-CoA dehydrogenase, mitochondrial (409 aa).

A mitochondrion-targeting transit peptide spans 1–22; sequence MAAAQRWLPGILRRGDGLARRL. FAD contacts are provided by residues 151-160 and 184-186; these read LAMSEPNSGS and WCT. Ser-160 provides a ligand contact to substrate. Substrate contacts are provided by residues 206 to 207, Tyr-261, and 268 to 271; these read SK and DLER. Glu-270 (proton acceptor) is an active-site residue. FAD is bound by residues Arg-296, Gln-307, and 364–368; that span reads QCLGG. A substrate-binding site is contributed by 391–392; the sequence is AG. 393 to 395 contributes to the FAD binding site; sequence TSE.

It belongs to the acyl-CoA dehydrogenase family. Homodimer. FAD serves as cofactor.

The protein localises to the mitochondrion. The catalysed reaction is 3-methylbutanoyl-CoA + oxidized [electron-transfer flavoprotein] + H(+) = 3-methylbut-2-enoyl-CoA + reduced [electron-transfer flavoprotein]. The protein operates within amino-acid degradation; L-leucine degradation; (S)-3-hydroxy-3-methylglutaryl-CoA from 3-isovaleryl-CoA: step 1/3. The polypeptide is Isovaleryl-CoA dehydrogenase, mitochondrial (Oryza sativa subsp. japonica (Rice)).